The primary structure comprises 291 residues: 3-hydroxy-5-phosphonooxypentane-2,4-dione thiolase (291 aa).

K203 (schiff-base intermediate with substrate) is an active-site residue.

Belongs to the DeoC/FbaB aldolase family. As to quaternary structure, homodecamer.

The protein resides in the cytoplasm. The catalysed reaction is dihydroxyacetone phosphate + acetyl-CoA = 3-hydroxy-2,4-dioxopentyl phosphate + CoA. Involved in the degradation of phospho-AI-2, thereby terminating induction of the lsr operon and closing the AI-2 signaling cycle. Catalyzes the transfer of an acetyl moiety from 3-hydroxy-5-phosphonooxypentane-2,4-dione to CoA to form glycerone phosphate and acetyl-CoA. This Yersinia pseudotuberculosis serotype O:1b (strain IP 31758) protein is 3-hydroxy-5-phosphonooxypentane-2,4-dione thiolase.